A 382-amino-acid polypeptide reads, in one-letter code: MSLKEKTQSLFANAFGYPATHTIQAPGRVNLIGEHTDYNDGFVLPCAIDYQTVISCAPRDDRNVRVMAADYENQLDEFSLDAPIVAHENYQWANYVRGVVKHLQLRNNSFGGVDMVISGNVPQGAGLSSSASLEVAVGTVLQQLYHLPLDGAQIALNGQEAENQFVGCNCGIMDQLISALGKKNHALLIDCRSLGTKAVSMPKGVAVVIINSNFKRTLVGSEYNTRREQCETGARFFQQPALRDVTIEEFNAVAHELDPIVAKRVRHILTENARTVEAASALEQGDLKRMGELMAESHASMRDDFEITVPQIDTLVEIVKAVIGDKGGVRMTGGGFGGCIVALIPEELVPAVQQAVAEQYEAKTGIKETFYVCKPSQGAGQC.

34–37 (EHTD) contacts substrate. Position 124 to 130 (124 to 130 (GAGLSSS)) interacts with ATP. Mg(2+)-binding residues include S130 and E162. Residue D174 is the Proton acceptor of the active site. Residue Y223 coordinates substrate.

Belongs to the GHMP kinase family. GalK subfamily.

It is found in the cytoplasm. The enzyme catalyses alpha-D-galactose + ATP = alpha-D-galactose 1-phosphate + ADP + H(+). The protein operates within carbohydrate metabolism; galactose metabolism. Functionally, catalyzes the transfer of the gamma-phosphate of ATP to D-galactose to form alpha-D-galactose-1-phosphate (Gal-1-P). This chain is Galactokinase, found in Escherichia fergusonii (strain ATCC 35469 / DSM 13698 / CCUG 18766 / IAM 14443 / JCM 21226 / LMG 7866 / NBRC 102419 / NCTC 12128 / CDC 0568-73).